We begin with the raw amino-acid sequence, 142 residues long: Small ribosomal subunit protein bS6 (142 aa).

The segment covering 110–133 (NKKPSHAKEKHEKTEHTHSHHAEE) has biased composition (basic and acidic residues). The segment at 110-142 (NKKPSHAKEKHEKTEHTHSHHAEEAESVGSHSE) is disordered.

This sequence belongs to the bacterial ribosomal protein bS6 family.

In terms of biological role, binds together with bS18 to 16S ribosomal RNA. The polypeptide is Small ribosomal subunit protein bS6 (Helicobacter pylori (strain P12)).